A 61-amino-acid polypeptide reads, in one-letter code: Temporin-SN3 (61 aa).

Residues Met1 to Cys22 form the signal peptide. Positions Glu23–Lys44 are cleaved as a propeptide — removed in mature form. Lys61 is subject to Lysine amide.

This sequence belongs to the frog skin active peptide (FSAP) family. Temporin subfamily. In terms of tissue distribution, expressed by the skin glands.

Its subcellular location is the secreted. Its function is as follows. Antimicrobial peptide. Active against some Gram-positive and Gram-negative bacterial strains. Active against fungus C.glabrata 090902 but not against C.albicans ATCC 12231. Shows weak hemolytic activity against human erythrocytes. The chain is Temporin-SN3 from Sylvirana spinulosa (Fine-spined frog).